The sequence spans 283 residues: Thymidylate synthase (283 aa).

Residue Arg-22 coordinates dUMP. Cys-160 functions as the Nucleophile in the catalytic mechanism. DUMP is bound by residues 180 to 183 (RSCD), Asn-191, and 221 to 223 (HIY). Asp-183 contributes to the (6R)-5,10-methylene-5,6,7,8-tetrahydrofolate binding site. Ser-282 contacts (6R)-5,10-methylene-5,6,7,8-tetrahydrofolate.

Belongs to the thymidylate synthase family. Bacterial-type ThyA subfamily. As to quaternary structure, homodimer.

It localises to the cytoplasm. It catalyses the reaction dUMP + (6R)-5,10-methylene-5,6,7,8-tetrahydrofolate = 7,8-dihydrofolate + dTMP. It functions in the pathway pyrimidine metabolism; dTTP biosynthesis. In terms of biological role, catalyzes the reductive methylation of 2'-deoxyuridine-5'-monophosphate (dUMP) to 2'-deoxythymidine-5'-monophosphate (dTMP) while utilizing 5,10-methylenetetrahydrofolate (mTHF) as the methyl donor and reductant in the reaction, yielding dihydrofolate (DHF) as a by-product. This enzymatic reaction provides an intracellular de novo source of dTMP, an essential precursor for DNA biosynthesis. The sequence is that of Thymidylate synthase from Aliivibrio fischeri (strain ATCC 700601 / ES114) (Vibrio fischeri).